We begin with the raw amino-acid sequence, 448 residues long: Probable glycine dehydrogenase (decarboxylating) subunit 1 (448 aa).

It belongs to the GcvP family. N-terminal subunit subfamily. As to quaternary structure, the glycine cleavage system is composed of four proteins: P, T, L and H. In this organism, the P 'protein' is a heterodimer of two subunits.

The enzyme catalyses N(6)-[(R)-lipoyl]-L-lysyl-[glycine-cleavage complex H protein] + glycine + H(+) = N(6)-[(R)-S(8)-aminomethyldihydrolipoyl]-L-lysyl-[glycine-cleavage complex H protein] + CO2. Functionally, the glycine cleavage system catalyzes the degradation of glycine. The P protein binds the alpha-amino group of glycine through its pyridoxal phosphate cofactor; CO(2) is released and the remaining methylamine moiety is then transferred to the lipoamide cofactor of the H protein. In Listeria monocytogenes serotype 4b (strain F2365), this protein is Probable glycine dehydrogenase (decarboxylating) subunit 1.